Reading from the N-terminus, the 313-residue chain is Ribosomal protein L11 methyltransferase (313 aa).

T161, G182, D204, and N247 together coordinate S-adenosyl-L-methionine.

This sequence belongs to the methyltransferase superfamily. PrmA family.

The protein resides in the cytoplasm. The catalysed reaction is L-lysyl-[protein] + 3 S-adenosyl-L-methionine = N(6),N(6),N(6)-trimethyl-L-lysyl-[protein] + 3 S-adenosyl-L-homocysteine + 3 H(+). Functionally, methylates ribosomal protein L11. The chain is Ribosomal protein L11 methyltransferase from Halalkalibacterium halodurans (strain ATCC BAA-125 / DSM 18197 / FERM 7344 / JCM 9153 / C-125) (Bacillus halodurans).